We begin with the raw amino-acid sequence, 172 residues long: Propanediol dehydratase small subunit (172 aa).

This sequence belongs to the diol/glycerol dehydratase small subunit family. In terms of assembly, the propanediol dehydratase enzyme is a heterotrimeric complex composed of a large (PduC), a medium (PduD) and a small (PduE) subunit. Requires adenosylcob(III)alamin as cofactor.

The protein localises to the bacterial microcompartment. It catalyses the reaction propane-1,2-diol = propanal + H2O. It participates in polyol metabolism; 1,2-propanediol degradation. Functionally, part of the PduCDE complex that catalyzes the dehydration of 1,2-propanediol (1,2-PD) to propionaldehyde. Localized in the bacterial microcompartment (BMC) dedicated to 1,2-PD degradation. Its function is as follows. Expression of a cosmid containing the full 21-gene pdu operon in E.coli allows E.coli to grow on 1,2-propanediol (1,2-PD) with the appearance of BMCs in its cytoplasm. In terms of biological role, the 1,2-PD-specific bacterial microcompartment (BMC) concentrates low levels of 1,2-PD catabolic enzymes, concentrates volatile reaction intermediates thus enhancing pathway flux and keeps the level of toxic, mutagenic propionaldehyde low. In Citrobacter freundii, this protein is Propanediol dehydratase small subunit.